The following is an 87-amino-acid chain: Beta-defensin 109 (87 aa).

The first 22 residues, 1 to 22 (MRLHLLLLILLLFSILLSPVRG), serve as a signal peptide directing secretion. Disulfide bonds link Cys31/Cys59, Cys38/Cys53, and Cys43/Cys60.

This sequence belongs to the beta-defensin family.

It is found in the secreted. In terms of biological role, has antibacterial activity. The chain is Beta-defensin 109 (DEFB109) from Pan troglodytes (Chimpanzee).